The chain runs to 748 residues: SNF-related serine/threonine-protein kinase (748 aa).

The region spanning 16–269 (YDLDKTLGRG…LEEIESHPWL (254 aa)) is the Protein kinase domain. Residues 22 to 30 (LGRGHFAVV) and Lys-45 contribute to the ATP site. Asp-139 functions as the Proton acceptor in the catalytic mechanism. Residue Ser-162 is modified to Phosphoserine. Thr-173 carries the post-translational modification Phosphothreonine; by LKB1. Residues 291-334 (SEEEHNSIIQRMVLGDIADRDAIVEALETNRYNHITATYFLLAE) enclose the UBA domain. 5 positions are modified to phosphoserine: Ser-362, Ser-390, Ser-482, Ser-495, and Ser-518. A disordered region spans residues 383–415 (SHATVPQSPARAGDNVLNGHRSKGLCDPAKKDE). Residues 491 to 503 (EEGESDDEFDMDE) are compositionally biased toward acidic residues. The interval 491 to 640 (EEGESDDEFD…SPSPASASAA (150 aa)) is disordered. Residues 522 to 532 (VHKRYHRRKSQ) show a composition bias toward basic residues. The segment covering 533-542 (GRGSSCSSSE) has biased composition (low complexity). At Arg-534 the chain carries Omega-N-methylarginine. Positions 549–558 (ESRRRLDKDS) are enriched in basic and acidic residues. 2 stretches are compositionally biased toward gly residues: residues 575 to 592 (GSEGDGGGQSKPSSGGGV) and 600 to 614 (QGTGGGSQGGSGGTP). Ser-606 is subject to Phosphoserine. Over residues 629 to 640 (SSSPSPASASAA) the composition is skewed to low complexity.

It belongs to the protein kinase superfamily. CAMK Ser/Thr protein kinase family. The cofactor is Mg(2+). Autophosphorylated. Phosphorylation on Thr-173 by STK11/LKB1 in complex with STE20-related adapter-alpha (STRADA) pseudo kinase and CAB39. As to expression, ubiquitously expressed in all tissues examined.

The protein localises to the nucleus. The enzyme catalyses L-seryl-[protein] + ATP = O-phospho-L-seryl-[protein] + ADP + H(+). The catalysed reaction is L-threonyl-[protein] + ATP = O-phospho-L-threonyl-[protein] + ADP + H(+). Activated by phosphorylation on Thr-173. In terms of biological role, may play a role in hematopoietic cell proliferation or differentiation. Potential mediator of neuronal apoptosis. The polypeptide is SNF-related serine/threonine-protein kinase (Mus musculus (Mouse)).